A 327-amino-acid polypeptide reads, in one-letter code: Neurogenic differentiation factor 6-A (327 aa).

Residues 17–85 (GANFPRDCVG…KKMTKARVDR (69 aa)) form a disordered region. The segment covering 24-46 (CVGDLKGNKQEPFEKEETLSHVM) has biased composition (basic and acidic residues). The span at 47–63 (DDDDSEKDEDEREDGQD) shows a compositional bias: acidic residues. Basic residues predominate over residues 68-80 (PRRRGPRKKKMTK). The short motif at 74–80 (RKKKMTK) is the Nuclear localization signal element. Positions 88 to 140 (VRRMEANARERNRMHGLNNALDSLRKVVPCYSKTQKLSKIETLRLAKNYIWAL) constitute a bHLH domain.

As to quaternary structure, efficient DNA binding requires dimerization with another bHLH protein. As to expression, embryonic olfactory bulbs. In adult, expressed in brain, eye, intestine, muscle, ovary and skin.

It is found in the nucleus. Differentiation factor required for neurogenesis. Acts as an upstream activator of isl1. The protein is Neurogenic differentiation factor 6-A of Danio rerio (Zebrafish).